Reading from the N-terminus, the 378-residue chain is Anhydro-N-acetylmuramic acid kinase (378 aa).

Position 9–16 (9–16) interacts with ATP; sequence GTSADGID.

This sequence belongs to the anhydro-N-acetylmuramic acid kinase family.

The enzyme catalyses 1,6-anhydro-N-acetyl-beta-muramate + ATP + H2O = N-acetyl-D-muramate 6-phosphate + ADP + H(+). The protein operates within amino-sugar metabolism; 1,6-anhydro-N-acetylmuramate degradation. Its pathway is cell wall biogenesis; peptidoglycan recycling. Its function is as follows. Catalyzes the specific phosphorylation of 1,6-anhydro-N-acetylmuramic acid (anhMurNAc) with the simultaneous cleavage of the 1,6-anhydro ring, generating MurNAc-6-P. Is required for the utilization of anhMurNAc either imported from the medium or derived from its own cell wall murein, and thus plays a role in cell wall recycling. The protein is Anhydro-N-acetylmuramic acid kinase of Synechococcus elongatus (strain ATCC 33912 / PCC 7942 / FACHB-805) (Anacystis nidulans R2).